Reading from the N-terminus, the 359-residue chain is Probable tyrosine-protein phosphatase pir-2 (359 aa).

The Tyrosine-protein phosphatase domain occupies 16-191; sequence QPVGNVIPRT…AKDKRDKQVD (176 aa). The active-site Phosphocysteine intermediate is the C131. Over residues 184–199 the composition is skewed to basic and acidic residues; it reads DKRDKQVDSDSDSSER. Disordered stretches follow at residues 184–211, 234–259, and 274–328; these read DKRDKQVDSDSDSSERQRKKKNKRKHRE, SVSGTDYQNSPNGVSVDPGQPQPHHW, and PVAN…RNRM. Positions 200 to 210 are enriched in basic residues; it reads QRKKKNKRKHR. Polar residues predominate over residues 234–246; it reads SVSGTDYQNSPNG. Acidic residues predominate over residues 290 to 309; the sequence is PQEEEEFEEDFEEIEEETET. The span at 319–328 shows a compositional bias: basic residues; the sequence is SKRRARRNRM.

Belongs to the protein-tyrosine phosphatase family. Non-receptor class CDC14 subfamily.

It carries out the reaction O-phospho-L-tyrosyl-[protein] + H2O = L-tyrosyl-[protein] + phosphate. The sequence is that of Probable tyrosine-protein phosphatase pir-2 from Caenorhabditis elegans.